A 206-amino-acid chain; its full sequence is Large ribosomal subunit protein uL4 (206 aa).

The protein belongs to the universal ribosomal protein uL4 family. In terms of assembly, part of the 50S ribosomal subunit.

Functionally, one of the primary rRNA binding proteins, this protein initially binds near the 5'-end of the 23S rRNA. It is important during the early stages of 50S assembly. It makes multiple contacts with different domains of the 23S rRNA in the assembled 50S subunit and ribosome. Its function is as follows. Forms part of the polypeptide exit tunnel. This is Large ribosomal subunit protein uL4 from Jannaschia sp. (strain CCS1).